The sequence spans 954 residues: Glycine dehydrogenase (decarboxylating) (954 aa).

Position 704 is an N6-(pyridoxal phosphate)lysine (Lys-704).

The protein belongs to the GcvP family. In terms of assembly, the glycine cleavage system is composed of four proteins: P, T, L and H. Pyridoxal 5'-phosphate is required as a cofactor.

It carries out the reaction N(6)-[(R)-lipoyl]-L-lysyl-[glycine-cleavage complex H protein] + glycine + H(+) = N(6)-[(R)-S(8)-aminomethyldihydrolipoyl]-L-lysyl-[glycine-cleavage complex H protein] + CO2. In terms of biological role, the glycine cleavage system catalyzes the degradation of glycine. The P protein binds the alpha-amino group of glycine through its pyridoxal phosphate cofactor; CO(2) is released and the remaining methylamine moiety is then transferred to the lipoamide cofactor of the H protein. This chain is Glycine dehydrogenase (decarboxylating), found in Rhizobium etli (strain CIAT 652).